The chain runs to 209 residues: Ribonuclease HII (209 aa).

An RNase H type-2 domain is found at 6–209 (SLEAGIDEAG…IKRMTNSRLF (204 aa)). A divalent metal cation contacts are provided by Asp12, Glu13, and Asp108.

Belongs to the RNase HII family. Requires Mn(2+) as cofactor. It depends on Mg(2+) as a cofactor.

The protein resides in the cytoplasm. The enzyme catalyses Endonucleolytic cleavage to 5'-phosphomonoester.. Functionally, endonuclease that specifically degrades the RNA of RNA-DNA hybrids. This is Ribonuclease HII from Caldivirga maquilingensis (strain ATCC 700844 / DSM 13496 / JCM 10307 / IC-167).